Reading from the N-terminus, the 502-residue chain is MGKYVLGVDLGTSAVKVSALDHSGQIVAQESFDYDLIQKQPGYNEQNPEDWVSGTTVAIVRLILNDHLDASNIEGLSYSGQMHGLVLLDENKKVLRPAILWNDTRSTPQREEIEAKLGDEFVHITRNQPLEGFTLTKLLWVKQNEPDIWAKAKYFVLPKDYVRYRMTGNLAMDYSDATGTVLLDVAKGEWSQKICAALDIPMSMCPPLIKSIDLAGTVTPAYAEFSGLTTDTKVFGGAADNAAGAVGAGILHPNMVLSSIGTSGVVLKYEDNADVNYHGVLQFEDHAIPDKFYSMGVTLAAGYSFTWFKKTFAPAEDFTDVVASAAKSTVGANGLLYTPYIVGERAPYADADIRGSFTGVDGTHQRYDFVRAVLEGIIFSFRDLFDIYEENGGDFDTVVSIGGGAKSPLWLQIQADIFNRKVVSLTNEQGPGMGAAMIAATGLGWFDSLQDCAETFVHFGKAYEPNPDNVKKYEKMHAIYKQVYQQTKTISEQLLDYRRAEL.

Residue 82–83 (MH) coordinates substrate. The active-site Proton acceptor is the D240.

The protein belongs to the FGGY kinase family.

The catalysed reaction is D-xylulose + ATP = D-xylulose 5-phosphate + ADP + H(+). Functionally, catalyzes the phosphorylation of D-xylulose to D-xylulose 5-phosphate. This Levilactobacillus brevis (Lactobacillus brevis) protein is Xylulose kinase.